A 408-amino-acid chain; its full sequence is MQSSAVFSLSPSLPLLKPRRLSLRHHPITTAASSSDLNVSPNVVSIPSLSRRSWRLASSDSPLRAWSGVPSPISHSLDTNRFRTAATAVPESAEEGDNSGKLTKVLELGLLFAMWYLFNIYFNIYNKQVLKALHAPMTVTLVQFAVGSVLITIMWVLNLYKRPKISGAQLAAILPLAVVHTLGNLFTNMSLGKVSVSFTHTIKAMEPFFSVLLSAMFLGEKPTPWVLGAIVPIVGGVALASISEVSFNWAGFSSAMASNLTNQSRNVLSKKVMVKKDDSLDNITLFSIITLMSLVLMAPVTFFTEGIKFTPSYIQSAGVNVKQIYTKSLIAALCFHAYQQVSYMILARVSPVTHSVGNCVKRVVVIVSSVIFFKTPVSPVNAFGTGIALAGVFLYSRVKGIKPKPKTA.

A chloroplast-targeting transit peptide spans 1–85 (MQSSAVFSLS…SLDTNRFRTA (85 aa)). A86 carries the N-acetylalanine modification. The next 8 membrane-spanning stretches (helical) occupy residues 105 to 125 (VLEL…FNIY), 137 to 157 (MTVT…MWVL), 165 to 185 (ISGA…LGNL), 198 to 218 (FTHT…AMFL), 222 to 242 (PTPW…LASI), 283 to 303 (ITLF…VTFF), 324 to 346 (IYTK…YMIL), and 377 to 396 (VSPV…FLYS). The EamA domain occupies 124-241 (IYNKQVLKAL…PIVGGVALAS (118 aa)).

Belongs to the TPT transporter family. PPT (TC 2.A.7.9) subfamily. Expressed in root columella, lateral root cap and root vasculature tissue. In leaves, highly expressed in xylem parenchyma cells. In flowers, expressed in sepals, petals, filaments of the stamens, anthers and stigma.

The protein localises to the plastid. The protein resides in the chloroplast membrane. Functionally, phosphoenolpyruvate/phosphate translocator that transports phosphoenolpyruvate (PEP), 2-phosphoglycerate, 3-phosphoglycerate and dihydroxyacetone phosphate. Imports PEP to the chloroplast stroma as one substrate of the shikimate pathway, from which aromatic amino acids and a variety of secondary products derive. Required for correct leaf mesophyll cell development and expression of chlorophyll a/b binding protein 3 (CAB3). This Arabidopsis thaliana (Mouse-ear cress) protein is Phosphoenolpyruvate/phosphate translocator 1, chloroplastic (PPT1).